The primary structure comprises 281 residues: Probable feruloyl esterase A (281 aa).

A signal peptide spans 1-21; sequence MKQFSAKYALILLATAGQALA. Disulfide bonds link cysteine 50/cysteine 279, cysteine 112/cysteine 115, and cysteine 248/cysteine 255. A substrate-binding site is contributed by aspartate 98. N-linked (GlcNAc...) asparagine glycosylation is present at asparagine 100. Tyrosine 101 is a substrate binding site. The active-site Nucleophile is the serine 154. Aspartate 215 serves as the catalytic Charge relay system. Position 268 (histidine 268) interacts with substrate. Histidine 268 acts as the Charge relay system in catalysis.

It belongs to the AB hydrolase superfamily. FaeA family.

The protein localises to the secreted. The catalysed reaction is feruloyl-polysaccharide + H2O = ferulate + polysaccharide.. In terms of biological role, involved in degradation of plant cell walls. Hydrolyzes the feruloyl-arabinose ester bond in arabinoxylans, and the feruloyl-galactose ester bond in pectin. This Aspergillus niger (strain ATCC MYA-4892 / CBS 513.88 / FGSC A1513) protein is Probable feruloyl esterase A (faeA).